The chain runs to 378 residues: UPF0754 membrane protein BCAH187_A1042 (378 aa).

2 consecutive transmembrane segments (helical) span residues 1 to 21 (MNIWLSMLTTTGLGAIIGGFT) and 357 to 377 (YLGALLGGMIGIVQGLLLLFL).

This sequence belongs to the UPF0754 family.

It is found in the cell membrane. The sequence is that of UPF0754 membrane protein BCAH187_A1042 from Bacillus cereus (strain AH187).